A 70-amino-acid polypeptide reads, in one-letter code: Protein SlyX homolog (70 aa).

The protein belongs to the SlyX family.

The polypeptide is Protein SlyX homolog (Shewanella piezotolerans (strain WP3 / JCM 13877)).